Consider the following 120-residue polypeptide: NAD(P)H-quinone oxidoreductase subunit 3, chloroplastic (120 aa).

A run of 3 helical transmembrane segments spans residues Ile-9 to Gly-29, Met-64 to Met-84, and Val-88 to Ser-108.

This sequence belongs to the complex I subunit 3 family. NDH is composed of at least 16 different subunits, 5 of which are encoded in the nucleus.

The protein localises to the plastid. The protein resides in the chloroplast thylakoid membrane. It carries out the reaction a plastoquinone + NADH + (n+1) H(+)(in) = a plastoquinol + NAD(+) + n H(+)(out). It catalyses the reaction a plastoquinone + NADPH + (n+1) H(+)(in) = a plastoquinol + NADP(+) + n H(+)(out). In terms of biological role, NDH shuttles electrons from NAD(P)H:plastoquinone, via FMN and iron-sulfur (Fe-S) centers, to quinones in the photosynthetic chain and possibly in a chloroplast respiratory chain. The immediate electron acceptor for the enzyme in this species is believed to be plastoquinone. Couples the redox reaction to proton translocation, and thus conserves the redox energy in a proton gradient. The polypeptide is NAD(P)H-quinone oxidoreductase subunit 3, chloroplastic (Lemna minor (Common duckweed)).